We begin with the raw amino-acid sequence, 129 residues long: Glycine cleavage system H protein (129 aa).

The region spanning 23-104 is the Lipoyl-binding domain; it reads TATIGITQHA…AYAAWLFRLK (82 aa). Lys-64 is subject to N6-lipoyllysine.

The protein belongs to the GcvH family. In terms of assembly, the glycine cleavage system is composed of four proteins: P, T, L and H. The cofactor is (R)-lipoate.

In terms of biological role, the glycine cleavage system catalyzes the degradation of glycine. The H protein shuttles the methylamine group of glycine from the P protein to the T protein. The polypeptide is Glycine cleavage system H protein (Nitrosospira multiformis (strain ATCC 25196 / NCIMB 11849 / C 71)).